Here is a 159-residue protein sequence, read N- to C-terminus: Transcription antitermination protein NusB (159 aa).

It belongs to the NusB family.

Functionally, involved in transcription antitermination. Required for transcription of ribosomal RNA (rRNA) genes. Binds specifically to the boxA antiterminator sequence of the ribosomal RNA (rrn) operons. The protein is Transcription antitermination protein NusB of Xanthomonas axonopodis pv. citri (strain 306).